We begin with the raw amino-acid sequence, 226 residues long: Ribonuclease T (226 aa).

An Exonuclease domain is found at 20 to 194; sequence VVIDVETAGF…YDTERTAELF (175 aa). Residues D23, E25, H181, and D186 each coordinate Mg(2+). The Proton donor/acceptor role is filled by H181.

Belongs to the RNase T family. In terms of assembly, homodimer. It depends on Mg(2+) as a cofactor.

In terms of biological role, trims short 3' overhangs of a variety of RNA species, leaving a one or two nucleotide 3' overhang. Responsible for the end-turnover of tRNA: specifically removes the terminal AMP residue from uncharged tRNA (tRNA-C-C-A). Also appears to be involved in tRNA biosynthesis. The sequence is that of Ribonuclease T from Shewanella denitrificans (strain OS217 / ATCC BAA-1090 / DSM 15013).